Consider the following 312-residue polypeptide: GATA transcription factor 6 (312 aa).

Disordered stretches follow at residues 1–33, 56–77, and 136–186; these read MESV…VDDL, QRKR…STAD, and KSQH…PLWL. A compositionally biased stretch (basic and acidic residues) spans 56 to 71; sequence QRKRGVSDENTLHRSN. Residues 142–151 are compositionally biased toward basic residues; sequence VKTRPKRART. Positions 143 to 150 match the Nuclear localization signal motif; that stretch reads KTRPKRAR. A compositionally biased stretch (low complexity) spans 157–186; sequence SHGSQSLTDSSSSSTTSSSSSPRPSSPLWL. The GATA-type zinc finger occupies 217–271; the sequence is QTQTRQCGHCGVQKTPQWRAGPLGAKTLCNACGVRYKSGRLLPEYRPACSPTFSS.

The protein belongs to the type IV zinc-finger family. Class A subfamily.

It localises to the nucleus. Its function is as follows. Transcriptional activator that specifically binds 5'-GATA-3' or 5'-GAT-3' motifs within gene promoters. May be involved in the regulation of some light-responsive genes. In Arabidopsis thaliana (Mouse-ear cress), this protein is GATA transcription factor 6 (GATA6).